Consider the following 907-residue polypeptide: Probable disease resistance protein At1g58390 (907 aa).

The 313-residue stretch at Gln144–Tyr456 folds into the NB-ARC domain. ATP is bound at residue Gly190–Thr197. 2 LRR repeats span residues Leu608–Leu631 and Met843–Tyr868.

It belongs to the disease resistance NB-LRR family.

Possible disease resistance protein. The polypeptide is Probable disease resistance protein At1g58390 (Arabidopsis thaliana (Mouse-ear cress)).